The following is a 119-amino-acid chain: Protein TusC (119 aa).

This sequence belongs to the DsrF/TusC family. In terms of assembly, heterohexamer, formed by a dimer of trimers. The hexameric TusBCD complex contains 2 copies each of TusB, TusC and TusD. The TusBCD complex interacts with TusE.

The protein resides in the cytoplasm. In terms of biological role, part of a sulfur-relay system required for 2-thiolation of 5-methylaminomethyl-2-thiouridine (mnm(5)s(2)U) at tRNA wobble positions. The protein is Protein TusC of Buchnera aphidicola subsp. Baizongia pistaciae (strain Bp).